We begin with the raw amino-acid sequence, 187 residues long: Probable chemoreceptor glutamine deamidase CheD (187 aa).

Residues 164–187 form a disordered region; the sequence is APQDVRRPTPPPMPAVASGDVDLF.

It belongs to the CheD family.

It catalyses the reaction L-glutaminyl-[protein] + H2O = L-glutamyl-[protein] + NH4(+). In terms of biological role, probably deamidates glutamine residues to glutamate on methyl-accepting chemotaxis receptors (MCPs), playing an important role in chemotaxis. The protein is Probable chemoreceptor glutamine deamidase CheD of Caulobacter vibrioides (strain ATCC 19089 / CIP 103742 / CB 15) (Caulobacter crescentus).